The following is a 122-amino-acid chain: Large ribosomal subunit protein uL14c (122 aa).

The protein belongs to the universal ribosomal protein uL14 family. Part of the 50S ribosomal subunit.

Its subcellular location is the plastid. It localises to the chloroplast. In terms of biological role, binds to 23S rRNA. This is Large ribosomal subunit protein uL14c from Buxus microphylla (Littleleaf boxwood).